We begin with the raw amino-acid sequence, 353 residues long: D-alanine--D-alanine ligase (353 aa).

Residues 141-349 (KAAFAAAGLP…LPDLVAQLVH (209 aa)) enclose the ATP-grasp domain. 176–231 (EAELGYPCFVKPANMGSSVGISKARHRDQLLAGLKEAARHDTRLVVEHGVSARELE) is a binding site for ATP. Residues D302, E316, and N318 each coordinate Mg(2+).

Belongs to the D-alanine--D-alanine ligase family. Mg(2+) is required as a cofactor. Requires Mn(2+) as cofactor.

The protein resides in the cytoplasm. The enzyme catalyses 2 D-alanine + ATP = D-alanyl-D-alanine + ADP + phosphate + H(+). It participates in cell wall biogenesis; peptidoglycan biosynthesis. Functionally, cell wall formation. The protein is D-alanine--D-alanine ligase of Synechococcus sp. (strain CC9311).